Consider the following 1240-residue polypeptide: Serine/threonine-protein kinase TAO2 (1240 aa).

Phosphoserine is present on S9. The 254-residue stretch at 28 to 281 (FSDLREIGHG…SEVLLKHRFV (254 aa)) folds into the Protein kinase domain. ATP contacts are provided by residues 34-42 (IGHGSFGAV) and K57. The Proton acceptor role is filled by D151. The residue at position 181 (S181) is a Phosphoserine. A disordered region spans residues 320-463 (APNGPGAEAP…PTSTSSSARR (144 aa)). A compositionally biased stretch (low complexity) spans 356-380 (SSHSVPSMSISASSQSSSVNSLADA). The span at 381–401 (SDNEEEEEEEEEEEEEEEEEG) shows a compositional bias: acidic residues. Residues 402–417 (PESREMAMMQEGEHTV) show a composition bias toward basic and acidic residues. At S422 the chain carries Phosphoserine. 2 coiled-coil regions span residues 493-528 (SALR…EEHS) and 581-608 (KELA…LQEN). The residue at position 663 (S663) is a Phosphoserine. The stretch at 688-720 (LRQHEATRELELRQLQAVQRTRAELTRLQHQTE) forms a coiled coil. 3 positions are modified to phosphoserine: S782, S830, and S832. Residues 805–934 (RILGKEGTTL…GDGCPSPDIP (130 aa)) adopt a coiled-coil conformation. The interval 899-946 (VLTPVPEEEEEEEEEGGAPIGTHRDPGDGCPSPDIPPEPPPSHLRQYP) is disordered. Residues 904-914 (PEEEEEEEEEG) show a composition bias toward acidic residues. Pro residues predominate over residues 931 to 940 (PDIPPEPPPS). The next 5 membrane-spanning stretches (helical) occupy residues 972–992 (LLPL…GGGL), 994–1014 (AALL…LFLC), 1019–1039 (LPPG…VLSL), 1045–1065 (LMGV…SLAL), and 1175–1195 (LASC…LLKG). L999 is subject to Omega-N-methylarginine. Position 1037 is a phosphoserine (L1037). The disordered stretch occupies residues 1212–1240 (LGLSASRQLPPGTVAGRRSQTRRTLPPWR).

This sequence belongs to the protein kinase superfamily. STE Ser/Thr protein kinase family. STE20 subfamily. As to quaternary structure, interacts with MAP2K3 and MAP2K6. Self-associates. Interacts with tubulins. Interacts with MAP3K7 and interferes with MAP3K7-binding to CHUK and thus prevents NF-kappa-B activation. Isoform 2 interacts with PCDH8; this complex may also include CDH2. Mg(2+) is required as a cofactor. Autophosphorylated. Phosphorylated by ATM. Post-translationally, phosphorylated on Ser-1037 by MAPK14. This phosphorylation is required PCDH8 for endocytosis.

It is found in the cytoplasmic vesicle membrane. Its subcellular location is the cytoplasm. The protein localises to the cytoskeleton. The protein resides in the cell projection. It localises to the dendrite. It carries out the reaction L-seryl-[protein] + ATP = O-phospho-L-seryl-[protein] + ADP + H(+). It catalyses the reaction L-threonyl-[protein] + ATP = O-phospho-L-threonyl-[protein] + ADP + H(+). Functionally, serine/threonine-protein kinase involved in different processes such as membrane blebbing and apoptotic bodies formation DNA damage response and MAPK14/p38 MAPK stress-activated MAPK cascade. Phosphorylates itself, MBP, activated MAPK8, MAP2K3, MAP2K6 and tubulins. Activates the MAPK14/p38 MAPK signaling pathway through the specific activation and phosphorylation of the upstream MAP2K3 and MAP2K6 kinases. In response to DNA damage, involved in the G2/M transition DNA damage checkpoint by activating the p38/MAPK14 stress-activated MAPK cascade, probably by mediating phosphorylation of upstream MAP2K3 and MAP2K6 kinases. May affect microtubule organization and stability. May play a role in the osmotic stress-MAPK8 pathway. Prevents MAP3K7-mediated activation of CHUK, and thus NF-kappa-B activation. Isoform 2, but not isoform 1, is required for PCDH8 endocytosis. Following homophilic interactions between PCDH8 extracellular domains, isoform 2 phosphorylates and activates MAPK14/p38 MAPK which in turn phosphorylates isoform 2. This process leads to PCDH8 endocytosis and CDH2 cointernalization. Both isoforms are involved in MAPK14/p38 MAPK activation. The sequence is that of Serine/threonine-protein kinase TAO2 (Taok2) from Mus musculus (Mouse).